A 416-amino-acid polypeptide reads, in one-letter code: Adenylosuccinate synthetase (416 aa).

GTP contacts are provided by residues 13–19 and 41–43; these read GDEGKGK and GHT. The active-site Proton acceptor is aspartate 14. Positions 14 and 41 each coordinate Mg(2+). IMP contacts are provided by residues 14 to 17, 39 to 42, threonine 126, arginine 140, glutamine 220, threonine 235, and arginine 299; these read DEGK and NAGH. Histidine 42 serves as the catalytic Proton donor. 295–301 contributes to the substrate binding site; that stretch reads TTTGRPR. GTP contacts are provided by residues arginine 301, 327-329, and 405-407; these read KLD and STS.

It belongs to the adenylosuccinate synthetase family. As to quaternary structure, homodimer. Requires Mg(2+) as cofactor.

The protein localises to the cytoplasm. It carries out the reaction IMP + L-aspartate + GTP = N(6)-(1,2-dicarboxyethyl)-AMP + GDP + phosphate + 2 H(+). It participates in purine metabolism; AMP biosynthesis via de novo pathway; AMP from IMP: step 1/2. Plays an important role in the de novo pathway of purine nucleotide biosynthesis. Catalyzes the first committed step in the biosynthesis of AMP from IMP. The polypeptide is Adenylosuccinate synthetase (Sulfurovum sp. (strain NBC37-1)).